The primary structure comprises 707 residues: MDSCHKIDYGLYALEILAQYHNVSVNPEEIKHRFDTDGTGLGLTSWLLAAKSLELKVKQVKKTIDRLNFISLPALVWREDGCHFILTKVSKEANRYLIFDLEQRNPRVLEQSEFEALYQGHIILIASRSSVTGKLAKFDFTWFIPAIIKYRKIFIETLVVSVFLQLFALITPLFFQVVMDKVLVHRGFSTLNVITVALSVVVVFEIILSGLRTYIFAHSTSRIDVELGAKLFRHLLALPISYFESRRVGDTVARVRELDQIRNFLTGQALTSVLDLLFSFIFFAVMWYYSPKLTLVILFSLPCYAAWSVFISPILRRRLDDKFSRNADNQSFLVESVTAINTIKAMAVSPQMTNIWDKQLAGYVAAGFKVTVLATIGQQGIQLIQKTVMIINLWLGAHLVISGDLSIGQLIAFNMLAGQIVAPVIRLAQIWQDFQQVGISVTRLGDVLNSPTESYHGKLALPEINGDITFRNIRFRYKPDSPVILDNINLSIKQGEVIGIVGRSGSGKSTLTKLIQRFYIPENGQVLIDGHDLALADPNWLRRQVGVVLQDNVLLNRSIIDNISLANPGMSVEKVIYAAKLAGAHDFISELREGYNTIVGEQGAGLSGGQRQRIAIARALVNNPKILIFDEATSALDYESEHVIMRNMHKICKGRTVIIIAHRLSTVKNADRIIVMEKGKIVEQGKHKELLSEPESLYSYLYQLQSD.

Residues 3–125 (SCHKIDYGLY…ALYQGHIILI (123 aa)) enclose the Peptidase C39 domain. The active site involves His83. The ABC transmembrane type-1 domain maps to 154 to 436 (FIETLVVSVF…LAQIWQDFQQ (283 aa)). 5 consecutive transmembrane segments (helical) span residues 158–178 (LVVSVFLQLFALITPLFFQVV), 191–211 (LNVITVALSVVVVFEIILSGL), 269–289 (ALTSVLDLLFSFIFFAVMWYY), 295–315 (LVILFSLPCYAAWSVFISPIL), and 388–408 (VMIINLWLGAHLVISGDLSIG). Positions 468-703 (ITFRNIRFRY…PESLYSYLYQ (236 aa)) constitute an ABC transporter domain. ATP is bound at residue 502–509 (GRSGSGKS).

It belongs to the ABC transporter superfamily. Protein-1 exporter (TC 3.A.1.109) family. As to quaternary structure, homodimer.

It is found in the cell inner membrane. Its function is as follows. Part of the ABC transporter complex HlyBD involved in hemolysin export. Transmembrane domains (TMD) form a pore in the inner membrane and the ATP-binding domain (NBD) is responsible for energy generation. This chain is Alpha-hemolysin translocation ATP-binding protein HlyB (hlyB), found in Escherichia coli.